Reading from the N-terminus, the 271-residue chain is Sulfur carrier protein FdhD (271 aa).

Cys114 serves as the catalytic Cysteine persulfide intermediate.

It belongs to the FdhD family.

It localises to the cytoplasm. Functionally, required for formate dehydrogenase (FDH) activity. Acts as a sulfur carrier protein that transfers sulfur from IscS to the molybdenum cofactor prior to its insertion into FDH. The protein is Sulfur carrier protein FdhD of Agrobacterium fabrum (strain C58 / ATCC 33970) (Agrobacterium tumefaciens (strain C58)).